The following is a 241-amino-acid chain: dTTP/UTP pyrophosphatase (241 aa).

At serine 38 the chain carries Phosphoserine. Residue aspartate 105 is the Proton acceptor of the active site.

This sequence belongs to the Maf family. YhdE subfamily. A divalent metal cation is required as a cofactor.

It localises to the cytoplasm. The protein resides in the nucleus. It catalyses the reaction dTTP + H2O = dTMP + diphosphate + H(+). The catalysed reaction is UTP + H2O = UMP + diphosphate + H(+). Its function is as follows. Nucleoside triphosphate pyrophosphatase that hydrolyzes dTTP and UTP. May have a dual role in cell division arrest and in preventing the incorporation of modified nucleotides into cellular nucleic acids. This is dTTP/UTP pyrophosphatase from Schizosaccharomyces pombe (strain 972 / ATCC 24843) (Fission yeast).